A 287-amino-acid polypeptide reads, in one-letter code: Uroplakin-3a (287 aa).

An N-terminal signal peptide occupies residues 1–18; that stretch reads MPPLWVVLALGCLRLGSG. At 19-207 the chain is on the lumenal side; it reads VNLQPQLASV…DTWPGRRSGG (189 aa). N-linked (GlcNAc...) asparagine glycosylation is found at asparagine 74, asparagine 139, and asparagine 170. A helical transmembrane segment spans residues 208–235; that stretch reads MIVITSILGSLPFFLLIGFAGAIVLSLV. At 236 to 287 the chain is on the cytoplasmic side; it reads DRGDADGATSHDSQITQEAVPKSLGTSEPSYTSVNRGPSLDRAEVYASKLQD. Residues 243–274 are disordered; sequence ATSHDSQITQEAVPKSLGTSEPSYTSVNRGPS. Positions 259–271 are enriched in polar residues; that stretch reads LGTSEPSYTSVNR.

It belongs to the uroplakin-3 family. In terms of assembly, heterodimer with uroplakin-1B (UPK1B). As to expression, bladder epithelium.

It localises to the endoplasmic reticulum membrane. Functionally, component of the asymmetric unit membrane (AUM); a highly specialized biomembrane elaborated by terminally differentiated urothelial cells. May play an important role in AUM-cytoskeleton interaction in terminally differentiated urothelial cells. It also contributes to the formation of urothelial glycocalyx which may play an important role in preventing bacterial adherence. The sequence is that of Uroplakin-3a (UPK3A) from Bos taurus (Bovine).